A 437-amino-acid chain; its full sequence is 3-phosphoshikimate 1-carboxyvinyltransferase (437 aa).

3 residues coordinate 3-phosphoshikimate: K24, S25, and R29. K24 contacts phosphoenolpyruvate. Residues G95 and R123 each coordinate phosphoenolpyruvate. 4 residues coordinate 3-phosphoshikimate: S168, Q170, D317, and K344. Residue Q170 participates in phosphoenolpyruvate binding. The Proton acceptor role is filled by D317. Phosphoenolpyruvate-binding residues include R348 and R390.

The protein belongs to the EPSP synthase family. As to quaternary structure, monomer.

The protein localises to the cytoplasm. It catalyses the reaction 3-phosphoshikimate + phosphoenolpyruvate = 5-O-(1-carboxyvinyl)-3-phosphoshikimate + phosphate. It functions in the pathway metabolic intermediate biosynthesis; chorismate biosynthesis; chorismate from D-erythrose 4-phosphate and phosphoenolpyruvate: step 6/7. Catalyzes the transfer of the enolpyruvyl moiety of phosphoenolpyruvate (PEP) to the 5-hydroxyl of shikimate-3-phosphate (S3P) to produce enolpyruvyl shikimate-3-phosphate and inorganic phosphate. The polypeptide is 3-phosphoshikimate 1-carboxyvinyltransferase (Wolinella succinogenes (strain ATCC 29543 / DSM 1740 / CCUG 13145 / JCM 31913 / LMG 7466 / NCTC 11488 / FDC 602W) (Vibrio succinogenes)).